The sequence spans 577 residues: Proline--tRNA ligase (577 aa).

This sequence belongs to the class-II aminoacyl-tRNA synthetase family. ProS type 1 subfamily. In terms of assembly, homodimer.

The protein resides in the cytoplasm. The catalysed reaction is tRNA(Pro) + L-proline + ATP = L-prolyl-tRNA(Pro) + AMP + diphosphate. Functionally, catalyzes the attachment of proline to tRNA(Pro) in a two-step reaction: proline is first activated by ATP to form Pro-AMP and then transferred to the acceptor end of tRNA(Pro). As ProRS can inadvertently accommodate and process non-cognate amino acids such as alanine and cysteine, to avoid such errors it has two additional distinct editing activities against alanine. One activity is designated as 'pretransfer' editing and involves the tRNA(Pro)-independent hydrolysis of activated Ala-AMP. The other activity is designated 'posttransfer' editing and involves deacylation of mischarged Ala-tRNA(Pro). The misacylated Cys-tRNA(Pro) is not edited by ProRS. The protein is Proline--tRNA ligase of Helicobacter pylori (strain P12).